We begin with the raw amino-acid sequence, 380 residues long: Succinyl-diaminopimelate desuccinylase (380 aa).

Residue His-69 coordinates Zn(2+). Asp-71 is a catalytic residue. Asp-102 provides a ligand contact to Zn(2+). Glu-135 functions as the Proton acceptor in the catalytic mechanism. Residues Glu-136, Glu-164, and His-353 each coordinate Zn(2+).

It belongs to the peptidase M20A family. DapE subfamily. In terms of assembly, homodimer. Zn(2+) is required as a cofactor. It depends on Co(2+) as a cofactor.

The catalysed reaction is N-succinyl-(2S,6S)-2,6-diaminopimelate + H2O = (2S,6S)-2,6-diaminopimelate + succinate. The protein operates within amino-acid biosynthesis; L-lysine biosynthesis via DAP pathway; LL-2,6-diaminopimelate from (S)-tetrahydrodipicolinate (succinylase route): step 3/3. Functionally, catalyzes the hydrolysis of N-succinyl-L,L-diaminopimelic acid (SDAP), forming succinate and LL-2,6-diaminopimelate (DAP), an intermediate involved in the bacterial biosynthesis of lysine and meso-diaminopimelic acid, an essential component of bacterial cell walls. The protein is Succinyl-diaminopimelate desuccinylase of Cereibacter sphaeroides (strain ATCC 17023 / DSM 158 / JCM 6121 / CCUG 31486 / LMG 2827 / NBRC 12203 / NCIMB 8253 / ATH 2.4.1.) (Rhodobacter sphaeroides).